The primary structure comprises 474 residues: Cysteine--tRNA ligase (474 aa).

C27 contributes to the Zn(2+) binding site. Residues 29 to 39 (PTVYNYIHIGN) carry the 'HIGH' region motif. 3 residues coordinate Zn(2+): C212, H237, and E241. The 'KMSKS' region motif lies at 271–275 (KMSKS). K274 lines the ATP pocket.

This sequence belongs to the class-I aminoacyl-tRNA synthetase family. As to quaternary structure, monomer. Zn(2+) serves as cofactor.

It is found in the cytoplasm. The enzyme catalyses tRNA(Cys) + L-cysteine + ATP = L-cysteinyl-tRNA(Cys) + AMP + diphosphate. In Lactobacillus delbrueckii subsp. bulgaricus (strain ATCC BAA-365 / Lb-18), this protein is Cysteine--tRNA ligase.